The chain runs to 31 residues: MALSDTQILAALVVALLPAFLAFRLSTELYK.

The helical transmembrane segment at 6 to 25 (TQILAALVVALLPAFLAFRL) threads the bilayer.

Belongs to the PsaM family.

The protein resides in the cellular thylakoid membrane. The protein is Photosystem I reaction center subunit XII of Synechocystis sp. (strain ATCC 27184 / PCC 6803 / Kazusa).